The primary structure comprises 219 residues: uncharacterized protein (219 aa).

An N-terminal signal peptide occupies residues Met1 to Ala15. Asn118 carries N-linked (GlcNAc...) asparagine glycosylation. The disordered stretch occupies residues Gly138–Gly174.

As to expression, component of the acid-insoluble and acid-soluble organic matrix of calcified layers of the shell (at protein level).

The protein resides in the secreted. This is an uncharacterized protein from Lottia gigantea (Giant owl limpet).